We begin with the raw amino-acid sequence, 248 residues long: MKILLTNDDGVRAPGLNALAEAMTVLGQVFVIAPDREQSAVGHALTLHHPLRANKIGENIFAVDGTPTDCVNLGIHSLLSFKPDIVVSGINRGANLGDDVTYSGTVSAAMEATLMGIPAIAVSLVTSAEGTNYAAAAQFAVKLAATVREKGLPADTFLNVNVPDLPRERIRPPLVTTQGKRSYEGTIVDKVDPRGRNYYWIGTVDLNFKDIDGSDYHAVSRGHVSVTPLHLDLTNYNSIAVLKKWEIF.

The a divalent metal cation site is built by D8, D9, S39, and N91.

Belongs to the SurE nucleotidase family. A divalent metal cation serves as cofactor.

The protein localises to the cytoplasm. It catalyses the reaction a ribonucleoside 5'-phosphate + H2O = a ribonucleoside + phosphate. Its function is as follows. Nucleotidase that shows phosphatase activity on nucleoside 5'-monophosphates. The polypeptide is 5'-nucleotidase SurE (Geotalea daltonii (strain DSM 22248 / JCM 15807 / FRC-32) (Geobacter daltonii)).